Reading from the N-terminus, the 939-residue chain is Valine--tRNA ligase (939 aa).

The 'HIGH' region signature appears at 47 to 57 (PNVTGILHMGH). The short motif at 563-567 (KLSKS) is the 'KMSKS' region element. Lys566 is an ATP binding site. Residues 873 to 939 (AEHLAKEHAR…QSILDKIASL (67 aa)) adopt a coiled-coil conformation.

This sequence belongs to the class-I aminoacyl-tRNA synthetase family. ValS type 1 subfamily. As to quaternary structure, monomer.

It localises to the cytoplasm. The enzyme catalyses tRNA(Val) + L-valine + ATP = L-valyl-tRNA(Val) + AMP + diphosphate. Catalyzes the attachment of valine to tRNA(Val). As ValRS can inadvertently accommodate and process structurally similar amino acids such as threonine, to avoid such errors, it has a 'posttransfer' editing activity that hydrolyzes mischarged Thr-tRNA(Val) in a tRNA-dependent manner. This Chlamydia muridarum (strain MoPn / Nigg) protein is Valine--tRNA ligase.